The following is a 102-amino-acid chain: Large ribosomal subunit protein bL21 (102 aa).

It belongs to the bacterial ribosomal protein bL21 family. Part of the 50S ribosomal subunit. Contacts protein L20.

In terms of biological role, this protein binds to 23S rRNA in the presence of protein L20. The sequence is that of Large ribosomal subunit protein bL21 from Finegoldia magna (strain ATCC 29328 / DSM 20472 / WAL 2508) (Peptostreptococcus magnus).